We begin with the raw amino-acid sequence, 240 residues long: Chromatin structure-remodeling complex protein BSH (240 aa).

The protein belongs to the SNF5 family. As to quaternary structure, interacts with SWI3A and SWI3B, but not with BRM. As to expression, expressed in roots, stems, leaves, flowers and siliques.

The protein localises to the nucleus. Functionally, component of a multiprotein complex equivalent of the yeast SWI/SNF complex, an ATP-dependent chromatin-remodeling complex, which is required for the positive and negative regulation of gene expression of a large number of genes. It changes chromatin structure by altering DNA-histone contacts within a nucleosome, leading eventually to a change in nucleosome position, thus facilitating or repressing binding of gene-specific transcription factors. This Arabidopsis thaliana (Mouse-ear cress) protein is Chromatin structure-remodeling complex protein BSH (BSH).